The sequence spans 500 residues: NAD(P)H-quinone oxidoreductase chain 4, chloroplastic (500 aa).

14 consecutive transmembrane segments (helical) span residues 4–24 (FPWL…IFFL), 37–57 (IGIC…FFQL), 87–107 (IGPI…AWPV), 113–130 (LFHF…GLFS), 134–154 (LLLF…LLSM), 167–187 (FILY…GMGL), 208–228 (ALEI…LPII), 242–262 (HYST…YGLI), 272–292 (AHSI…IYAA), 305–325 (IAYS…SITD), 330–350 (GAVL…FLAG), 386–406 (LALP…GIIT), 416–436 (VLIT…SLSM), and 462–482 (LFIS…PDFV).

It belongs to the complex I subunit 4 family.

Its subcellular location is the plastid. It localises to the chloroplast thylakoid membrane. It catalyses the reaction a plastoquinone + NADH + (n+1) H(+)(in) = a plastoquinol + NAD(+) + n H(+)(out). The enzyme catalyses a plastoquinone + NADPH + (n+1) H(+)(in) = a plastoquinol + NADP(+) + n H(+)(out). This chain is NAD(P)H-quinone oxidoreductase chain 4, chloroplastic, found in Ceratophyllum demersum (Rigid hornwort).